A 483-amino-acid chain; its full sequence is Isocitrate dehydrogenase [NADP] (483 aa).

T74 serves as a coordination point for NADP(+). Positions 83, 85, 89, 99, and 121 each coordinate D-threo-isocitrate. D232 contributes to the Mg(2+) binding site. NADP(+) is bound by residues H264–I270 and N277.

The protein belongs to the isocitrate and isopropylmalate dehydrogenases family. Homodimer. Requires Mg(2+) as cofactor. Mn(2+) serves as cofactor.

It catalyses the reaction D-threo-isocitrate + NADP(+) = 2-oxoglutarate + CO2 + NADPH. Catalyzes the oxidative decarboxylation of isocitrate to 2-oxoglutarate and carbon dioxide with the concomitant reduction of NADP(+). The polypeptide is Isocitrate dehydrogenase [NADP] (icd) (Rickettsia bellii (strain RML369-C)).